A 74-amino-acid polypeptide reads, in one-letter code: Kappa-stichotoxin-Sgt4a (74 aa).

A signal peptide spans 1–22 (MKFQVIAAVLLIEFCLCVVVTA). A propeptide spanning residues 23–39 (RMELQDVEDVENGFQKR) is cleaved from the precursor. Residues 42-74 (CIDTIPQSRCTAFQCKHSMKYRLSFCRKTCGTC) enclose the ShKT domain. Intrachain disulfides connect Cys42-Cys74, Cys51-Cys67, and Cys56-Cys71.

It belongs to the sea anemone type 1 potassium channel toxin family. Type 1a subfamily.

The protein resides in the secreted. It localises to the nematocyst. Inhibits voltage-gated potassium channels (Kv) with higher potency for Kv1.1/KCNA1 and Kv1.3/KCNA3. The sequence is that of Kappa-stichotoxin-Sgt4a from Stichodactyla gigantea (Giant carpet anemone).